The sequence spans 87 residues: Cytochrome c oxidase assembly factor 3, mitochondrial (87 aa).

The helical transmembrane segment at 47–69 threads the bilayer; the sequence is NNLLTAGALGVSVLAIYGYSIFS.

Belongs to the COA3 family.

It localises to the mitochondrion membrane. Functionally, plays a critical role in the biogenesis and activity of cytochrome c oxidase (COX) (complex IV). The polypeptide is Cytochrome c oxidase assembly factor 3, mitochondrial (Ccdc56) (Drosophila melanogaster (Fruit fly)).